The primary structure comprises 614 residues: UvrABC system protein C (614 aa).

Residues 26 to 104 enclose the GIY-YIG domain; sequence NLPGVYKMLG…IKEYRPPYNV (79 aa). A UVR domain is found at 215–250; sequence SDIHSALIEKMEASAEELDFEKAVFYRDQLSMLREV.

This sequence belongs to the UvrC family. As to quaternary structure, interacts with UvrB in an incision complex.

The protein localises to the cytoplasm. Its function is as follows. The UvrABC repair system catalyzes the recognition and processing of DNA lesions. UvrC both incises the 5' and 3' sides of the lesion. The N-terminal half is responsible for the 3' incision and the C-terminal half is responsible for the 5' incision. This is UvrABC system protein C from Psychrobacter arcticus (strain DSM 17307 / VKM B-2377 / 273-4).